Here is a 328-residue protein sequence, read N- to C-terminus: uncharacterized protein (328 aa).

Residues 37–179 form the SIS domain; sequence LTERLLCHQG…AMTVLRCRKI (143 aa). 52–57 lines the ATP pocket; that stretch reads GIGKSG. 2 CBS domains span residues 205–264 and 273–328; these read LSPR…GGAI and MTRK…AGLL.

The protein belongs to the SIS family. GutQ/KpsF subfamily.

This is an uncharacterized protein from Chlamydia muridarum (strain MoPn / Nigg).